Reading from the N-terminus, the 417-residue chain is Phosphoglycerate kinase 2 (417 aa).

An N-acetylserine modification is found at Ser-2. Residues Ser-2 and Ser-4 each carry the phosphoserine modification. At Lys-11 the chain carries N6-acetyllysine. (2R)-3-phosphoglycerate-binding residues include Val-23, Asp-24, Phe-25, Asn-26, Gln-38, and Arg-39. Residue Lys-48 is modified to N6-acetyllysine. (2R)-3-phosphoglycerate is bound by residues Ser-62, His-63, Gly-65, and Arg-66. An N6-acetyllysine mark is found at Lys-75, Lys-86, and Lys-97. The (2R)-3-phosphoglycerate site is built by Leu-122 and Arg-123. 2 positions are modified to N6-acetyllysine: Lys-131 and Lys-146. (2R)-3-phosphoglycerate contacts are provided by His-170 and Arg-171. Tyr-196 carries the phosphotyrosine modification. Lys-199 carries the N6-acetyllysine modification. Gly-214 contributes to the ADP binding site. Position 214 (Gly-214) interacts with CDP. Residues Ala-215 and Lys-216 each contribute to the AMP site. Residue Ala-215 coordinates ATP. A Mg(2+)-binding site is contributed by Ala-215. Residues Ala-218 and Asp-219 each contribute to the Mg(2+) site. Asp-219 serves as a coordination point for CDP. Position 220 (Lys-220) interacts with AMP. Lys-220 is a binding site for ATP. Gly-238 is an ADP binding site. CDP is bound at residue Gly-238. Position 239 (Gly-239) interacts with AMP. Gly-239 contacts ATP. 2 positions are modified to N6-acetyllysine: Lys-267 and Lys-291. Gly-313 contributes to the AMP binding site. Gly-313 contributes to the ATP binding site. The CDP site is built by Gly-338 and Phe-343. Phe-343 provides a ligand contact to ADP. Glu-344 contacts AMP. 3 residues coordinate ATP: Glu-344, Asp-375, and Thr-376. Asp-375 contacts Mg(2+).

Belongs to the phosphoglycerate kinase family. In terms of assembly, monomer. It depends on Mg(2+) as a cofactor. As to expression, mainly found in round spermatids. Localized on the principle piece in the sperm (at protein level). Testis-specific. Expression significantly decreased in the testis of elderly men.

Its subcellular location is the cytoplasm. It catalyses the reaction (2R)-3-phosphoglycerate + ATP = (2R)-3-phospho-glyceroyl phosphate + ADP. It participates in carbohydrate degradation; glycolysis; pyruvate from D-glyceraldehyde 3-phosphate: step 2/5. In terms of biological role, essential for sperm motility and male fertility. Not required for the completion of spermatogenesis. In Homo sapiens (Human), this protein is Phosphoglycerate kinase 2 (PGK2).